The sequence spans 385 residues: DNA replication and repair protein RecF (385 aa).

Residue 30-37 (GANAAGKT) coordinates ATP.

Belongs to the RecF family.

Its subcellular location is the cytoplasm. Its function is as follows. The RecF protein is involved in DNA metabolism; it is required for DNA replication and normal SOS inducibility. RecF binds preferentially to single-stranded, linear DNA. It also seems to bind ATP. The sequence is that of DNA replication and repair protein RecF from Herpetosiphon aurantiacus (strain ATCC 23779 / DSM 785 / 114-95).